Consider the following 196-residue polypeptide: Large ribosomal subunit protein uL18 (196 aa).

It belongs to the universal ribosomal protein uL18 family. In terms of assembly, part of the 50S ribosomal subunit. Contacts the 5S and 23S rRNAs.

Its function is as follows. This is one of the proteins that bind and probably mediate the attachment of the 5S RNA into the large ribosomal subunit, where it forms part of the central protuberance. In Thermofilum pendens (strain DSM 2475 / Hrk 5), this protein is Large ribosomal subunit protein uL18.